The following is a 614-amino-acid chain: Threonine--tRNA ligase (614 aa).

The segment at 1-138 is editing domain; sequence MRTLMIHSDY…HPLSELSRTI (138 aa). The interval 133 to 157 is disordered; that stretch reads ELSRTITTEPEEESEDSEEEPSEPS. Positions 141 to 154 are enriched in acidic residues; it reads EPEEESEDSEEEPS. The catalytic stretch occupies residues 200 to 495; that stretch reads PHVRLMREKE…TDKGNKPSLP (296 aa). Residues Cys-292, His-344, and His-466 each contribute to the Zn(2+) site.

The protein belongs to the class-II aminoacyl-tRNA synthetase family. As to quaternary structure, homodimer. It depends on Zn(2+) as a cofactor.

It is found in the cytoplasm. It catalyses the reaction tRNA(Thr) + L-threonine + ATP = L-threonyl-tRNA(Thr) + AMP + diphosphate + H(+). Its function is as follows. Catalyzes the attachment of threonine to tRNA(Thr) in a two-step reaction: L-threonine is first activated by ATP to form Thr-AMP and then transferred to the acceptor end of tRNA(Thr). Also edits incorrectly charged L-seryl-tRNA(Thr). The chain is Threonine--tRNA ligase from Methanosphaera stadtmanae (strain ATCC 43021 / DSM 3091 / JCM 11832 / MCB-3).